A 420-amino-acid chain; its full sequence is Dynein axonemal assembly factor 4 (420 aa).

The CS domain occupies 3–87; sequence LQVSDYSWQQ…KEAAMWETLS (85 aa). Positions 7–103 are mediates interaction with ESR1 and STUB1; that stretch reads DYSWQQTKTA…EMMQRIREKS (97 aa). 3 TPR repeats span residues 290–323, 324–357, and 366–399; these read PEWL…NNKM, PLLY…LMPP, and MKAH…DPSN.

In terms of assembly, interacts with ZMYND10. Interacts with STUB1. Interacts with ESR1 and ESR2. Interacts with DNAAF2. Interacts with CCT3, CCT4, CCT5 and CCT8. Interacts with DNAAF6/PIH1D3.

Its subcellular location is the nucleus. The protein resides in the cytoplasm. The protein localises to the cell projection. It is found in the neuron projection. It localises to the dynein axonemal particle. Its function is as follows. Involved in neuronal migration during development of the cerebral neocortex. May regulate the stability and proteasomal degradation of the estrogen receptors that play an important role in neuronal differentiation, survival and plasticity. Axonemal dynein assembly factor required for ciliary motility. The sequence is that of Dynein axonemal assembly factor 4 from Pan paniscus (Pygmy chimpanzee).